The primary structure comprises 390 residues: Protein dom34 (390 aa).

Belongs to the eukaryotic release factor 1 family. Pelota subfamily. In terms of assembly, component of the Dom34-Hbs1 complex, also named Pelota-HBS1L complex, composed of dom34 and hbs1. A divalent metal cation serves as cofactor.

The protein localises to the cytoplasm. In terms of biological role, component of the Dom34-Hbs1 complex, a complex that recognizes stalled ribosomes and triggers the No-Go Decay (NGD) pathway. In the Dom34-Hbs1 complex, dom34 recognizes ribosomes stalled at the 3' end of an mRNA and engages stalled ribosomes by destabilizing mRNA in the mRNA channel. Following ribosome-binding, the Dom34-Hbs1 complex promotes the disassembly of stalled ribosomes, followed by degradation of damaged mRNAs as part of the NGD pathway. The chain is Protein dom34 from Schizosaccharomyces pombe (strain 972 / ATCC 24843) (Fission yeast).